We begin with the raw amino-acid sequence, 315 residues long: MEKFKAVLDLQIKHRSALGYGLVTLLTAGGEKIFSTVVFQCPCTATLNLTYGLVFLLVPALALFLLGYALSARTWRLLTGCCSRSASTRSSSGLRSTLVCAQVSAVAALAPLTWVAVALLGGSFYQCAVSGSTRLASYLCKDRNHSCIAKLPQVPCNKQEAEMQEILSQLKAQSQVLGWVLIAAVIFLLLVFKCVSRCFSPVSYLQLKFWEIYLEKEKQILQSQAAEHATQLARENIRSFFECSKPKECNTPSRKDWQQISALYTFNSKNQFYSMLHKYVSRKEVSSSLHSVEGDVVVPVLGFVDDAAMANTHGV.

At 1 to 21 (MEKFKAVLDLQIKHRSALGYG) the chain is on the cytoplasmic side. A helical transmembrane segment spans residues 22–37 (LVTLLTAGGEKIFSTV). Over 38–46 (VFQCPCTAT) the chain is Extracellular. Cystine bridges form between Cys41-Cys127, Cys43-Cys156, and Cys140-Cys147. The helical transmembrane segment at 47 to 68 (LNLTYGLVFLLVPALALFLLGY) threads the bilayer. Residues 69–103 (ALSARTWRLLTGCCSRSASTRSSSGLRSTLVCAQV) are Cytoplasmic-facing. The helical transmembrane segment at 104–128 (SAVAALAPLTWVAVALLGGSFYQCA) threads the bilayer. The Extracellular segment spans residues 129–169 (VSGSTRLASYLCKDRNHSCIAKLPQVPCNKQEAEMQEILSQ). The helical transmembrane segment at 170–192 (LKAQSQVLGWVLIAAVIFLLLVF) threads the bilayer. At 193–315 (KCVSRCFSPV…DAAMANTHGV (123 aa)) the chain is on the cytoplasmic side.

It belongs to the CALHM family. Oligomerizes to form decameric and undecameric channels.

Its subcellular location is the cell membrane. The catalysed reaction is ATP(in) = ATP(out). Its function is as follows. Pore-forming subunit of an ATP-permeable channel. In response to pathogen-derived and proinflammatory stimuli, relocates from intracellular compartments to NK-dendritic cell and NK-macrophage immune synapses where it mediates ATP efflux and NK cell activation involved in antimicrobial and antitumor responses. May assemble to form gap junction channel-like structures with gating and ion conductance likely regulated by membrane lipids and voltage rather than by extracellular calcium levels. This Rattus norvegicus (Rat) protein is Calcium homeostasis modulator protein 6.